An 814-amino-acid chain; its full sequence is Acyl-coenzyme A dehydrogenase (814 aa).

The active-site Proton acceptor is Glu-497.

This sequence belongs to the acyl-CoA dehydrogenase family. Requires FAD as cofactor.

It catalyses the reaction a medium-chain 2,3-saturated fatty acyl-CoA + oxidized [electron-transfer flavoprotein] + H(+) = a medium-chain (2E)-enoyl-CoA + reduced [electron-transfer flavoprotein]. The catalysed reaction is a long-chain 2,3-saturated fatty acyl-CoA + oxidized [electron-transfer flavoprotein] + H(+) = a long-chain (2E)-enoyl-CoA + reduced [electron-transfer flavoprotein]. Its pathway is lipid metabolism; fatty acid beta-oxidation. Catalyzes the dehydrogenation of acyl-coenzymes A (acyl-CoAs) to 2-enoyl-CoAs, the first step of the beta-oxidation cycle of fatty acid degradation. Is required for the utilization of medium- and long-chain fatty acids as sole carbon sources for growth. This Escherichia coli O157:H7 protein is Acyl-coenzyme A dehydrogenase (fadE).